A 293-amino-acid polypeptide reads, in one-letter code: Mediator of RNA polymerase II transcription subunit 27 (293 aa).

It belongs to the Mediator complex subunit 27 family. In terms of assembly, component of the Mediator complex, which includes at least CDK8, MED4, MED6, MED11, MED14, MED17, MED18, MED20, MED21, MED22, MED27, MED28, MED30 and MED31.

It is found in the nucleus. In terms of biological role, component of the Mediator complex, a coactivator involved in the regulated transcription of nearly all RNA polymerase II-dependent genes. Mediator functions as a bridge to convey information from gene-specific regulatory proteins to the basal RNA polymerase II transcription machinery. Mediator is recruited to promoters by direct interactions with regulatory proteins and serves as a scaffold for the assembly of a functional preinitiation complex with RNA polymerase II and the general transcription factors. Required for activated transcription of the MtnA gene. This Drosophila melanogaster (Fruit fly) protein is Mediator of RNA polymerase II transcription subunit 27 (MED27).